The following is a 308-amino-acid chain: Glutaminase (308 aa).

7 residues coordinate substrate: S66, N117, E161, N168, Y192, Y244, and V262.

Belongs to the glutaminase family. As to quaternary structure, homotetramer.

The enzyme catalyses L-glutamine + H2O = L-glutamate + NH4(+). This chain is Glutaminase, found in Salmonella dublin (strain CT_02021853).